Consider the following 358-residue polypeptide: Fructose-bisphosphate aldolase (358 aa).

Serine 61 provides a ligand contact to D-glyceraldehyde 3-phosphate. The Proton donor role is filled by aspartate 108. The Zn(2+) site is built by histidine 109, aspartate 143, glutamate 173, and histidine 225. Glycine 226 is a dihydroxyacetone phosphate binding site. Histidine 264 is a Zn(2+) binding site. Dihydroxyacetone phosphate-binding positions include 265 to 267 (GGS) and 286 to 289 (NIDT). A phosphothreonine mark is found at threonine 289, threonine 312, threonine 340, and threonine 342.

The protein belongs to the class II fructose-bisphosphate aldolase family. As to quaternary structure, homodimer. Zn(2+) serves as cofactor.

It catalyses the reaction beta-D-fructose 1,6-bisphosphate = D-glyceraldehyde 3-phosphate + dihydroxyacetone phosphate. It participates in carbohydrate degradation; glycolysis; D-glyceraldehyde 3-phosphate and glycerone phosphate from D-glucose: step 4/4. Its function is as follows. Catalyzes the aldol condensation of dihydroxyacetone phosphate (DHAP or glycerone-phosphate) with glyceraldehyde 3-phosphate (G3P) to form fructose 1,6-bisphosphate (FBP) in gluconeogenesis and the reverse reaction in glycolysis. The chain is Fructose-bisphosphate aldolase (fba1) from Schizosaccharomyces pombe (strain 972 / ATCC 24843) (Fission yeast).